The sequence spans 50 residues: Protein hunchback (50 aa).

3 C2H2-type zinc fingers span residues 1–5 (HLRNH), 11–33 (FKCG…MKSH), and 39–50 (YRCANCCYATKY).

Belongs to the hunchback C2H2-type zinc-finger protein family.

The protein localises to the nucleus. In terms of biological role, gap class segmentation protein that controls development of head structures. The chain is Protein hunchback (hb) from Pholcus phalangioides (Longbodied cellar spider).